A 273-amino-acid polypeptide reads, in one-letter code: Formamidopyrimidine-DNA glycosylase (273 aa).

Pro-2 acts as the Schiff-base intermediate with DNA in catalysis. The active-site Proton donor is Glu-3. Catalysis depends on Lys-58, which acts as the Proton donor; for beta-elimination activity. His-92, Arg-111, and Lys-153 together coordinate DNA. The FPG-type zinc finger occupies 238 to 272 (KVYGREGQSCLSCSSTIIKIKHSGRSTFYCKTCQY). Catalysis depends on Arg-262, which acts as the Proton donor; for delta-elimination activity.

The protein belongs to the FPG family. As to quaternary structure, monomer. It depends on Zn(2+) as a cofactor.

The enzyme catalyses Hydrolysis of DNA containing ring-opened 7-methylguanine residues, releasing 2,6-diamino-4-hydroxy-5-(N-methyl)formamidopyrimidine.. The catalysed reaction is 2'-deoxyribonucleotide-(2'-deoxyribose 5'-phosphate)-2'-deoxyribonucleotide-DNA = a 3'-end 2'-deoxyribonucleotide-(2,3-dehydro-2,3-deoxyribose 5'-phosphate)-DNA + a 5'-end 5'-phospho-2'-deoxyribonucleoside-DNA + H(+). Functionally, involved in base excision repair of DNA damaged by oxidation or by mutagenic agents. Acts as a DNA glycosylase that recognizes and removes damaged bases. Has a preference for oxidized purines, such as 7,8-dihydro-8-oxoguanine (8-oxoG). Has AP (apurinic/apyrimidinic) lyase activity and introduces nicks in the DNA strand. Cleaves the DNA backbone by beta-delta elimination to generate a single-strand break at the site of the removed base with both 3'- and 5'-phosphates. In Rickettsia peacockii (strain Rustic), this protein is Formamidopyrimidine-DNA glycosylase.